The following is a 140-amino-acid chain: ATP synthase epsilon chain 1 (140 aa).

Belongs to the ATPase epsilon chain family. F-type ATPases have 2 components, CF(1) - the catalytic core - and CF(0) - the membrane proton channel. CF(1) has five subunits: alpha(3), beta(3), gamma(1), delta(1), epsilon(1). CF(0) has three main subunits: a, b and c.

The protein resides in the cell inner membrane. Produces ATP from ADP in the presence of a proton gradient across the membrane. This chain is ATP synthase epsilon chain 1, found in Methylococcus capsulatus (strain ATCC 33009 / NCIMB 11132 / Bath).